We begin with the raw amino-acid sequence, 787 residues long: Signal transducer and activator of transcription 5B (787 aa).

Tyr90 carries the post-translational modification Phosphotyrosine. Position 128 is a phosphoserine (Ser128). The SH2 domain maps to Trp589–Val686. Tyr682 bears the Phosphotyrosine mark. Tyr699 carries the phosphotyrosine; by HCK, JAK and PTK6 modification.

It belongs to the transcription factor STAT family. In terms of assembly, upon activation, forms a homodimer or a heterodimer with a related family member. Binds NR3C1. Interacts with NCOA1. Interacts with NMI. Interacts with SOCS7. Interacts (via SH2 domain) with INSR. Interacts with CPEB3; this inhibits STAT5B-mediated transcriptional activation. In terms of processing, tyrosine phosphorylated in response to signaling via activated KIT, resulting in translocation to the nucleus. Tyrosine phosphorylated in response to signaling via activated FLT3; wild-type FLT3 results in much weaker phosphorylation than constitutively activated mutant FLT3. Alternatively, can be phosphorylated by JAK2. Phosphorylation at Tyr-699 by PTK6 or HCK leads to an increase of its transcriptional activity.

It is found in the cytoplasm. The protein localises to the nucleus. In terms of biological role, carries out a dual function: signal transduction and activation of transcription. Mediates cellular responses to the cytokine KITLG/SCF and other growth factors. Binds to the GAS element and activates PRL-induced transcription. Positively regulates hematopoietic/erythroid differentiation. This is Signal transducer and activator of transcription 5B (STAT5B) from Bos taurus (Bovine).